A 393-amino-acid chain; its full sequence is Synaptic vesicle membrane protein VAT-1 homolog (393 aa).

Positions 1–40 (MSDEREVAEAATGEDASSPPPKTEAASDPQHPAASEGAAA) are disordered. An N-acetylserine modification is found at Ser-2. Residues Ser-2, Ser-18, Ser-27, Ser-35, and Ser-44 each carry the phosphoserine modification.

It belongs to the zinc-containing alcohol dehydrogenase family. Quinone oxidoreductase subfamily. Expressed in brain. Also expressed in glioblastoma cells.

The protein localises to the cytoplasm. It is found in the mitochondrion outer membrane. Possesses ATPase activity. Plays a part in calcium-regulated keratinocyte activation in epidermal repair mechanisms. Has no effect on cell proliferation. Negatively regulates mitochondrial fusion in cooperation with mitofusin proteins (MFN1-2). This Homo sapiens (Human) protein is Synaptic vesicle membrane protein VAT-1 homolog (VAT1).